We begin with the raw amino-acid sequence, 288 residues long: MKKLSFQQIILTLQNYWQDYGCAILQPYDAHVGAGTFHPATVLRCLGTKPWSVAYVQPSRRPGDSRYGMHPNRMQHYYQFQVILKPSPDNIQELYLKSLEYLGIDLKIHDIRFVEDDWESPTLGAAGLGWEVWCNGMEVSQFTYMQQIGGIECRPVAGEITYGLERLALYIQGVDEVRELDWNGQVGEKALKYGEVDFEAEWQFSKYNLELADSEMLLRHFKDSEDQCERLIKANLPMPAYDECLKASHAFNQLNALGVISVTERASYVLRVRHLARICCTKWLEMNK.

Belongs to the class-II aminoacyl-tRNA synthetase family. In terms of assembly, tetramer of two alpha and two beta subunits.

It localises to the cytoplasm. The catalysed reaction is tRNA(Gly) + glycine + ATP = glycyl-tRNA(Gly) + AMP + diphosphate. In Rickettsia peacockii (strain Rustic), this protein is Glycine--tRNA ligase alpha subunit.